The sequence spans 300 residues: Epimerase family protein SAV0769 (300 aa).

Belongs to the NAD(P)-dependent epimerase/dehydratase family. SDR39U1 subfamily.

This is Epimerase family protein SAV0769 from Staphylococcus aureus (strain Mu50 / ATCC 700699).